The chain runs to 62 residues: UPF0291 protein CLD_1956 (62 aa).

It belongs to the UPF0291 family.

The protein resides in the cytoplasm. This is UPF0291 protein CLD_1956 from Clostridium botulinum (strain Okra / Type B1).